Consider the following 263-residue polypeptide: uncharacterized protein (263 aa).

The region spanning 107-246 (ILGVLNGDGS…CCSFLEKLGI (140 aa)) is the DOD-type homing endonuclease domain.

This is an uncharacterized protein from Methanocaldococcus jannaschii (strain ATCC 43067 / DSM 2661 / JAL-1 / JCM 10045 / NBRC 100440) (Methanococcus jannaschii).